The following is a 156-amino-acid chain: ATP synthase subunit b (156 aa).

Residues 7–27 traverse the membrane as a helical segment; that stretch reads LFAQMIVFFVLWWVVARFVWP.

It belongs to the ATPase B chain family. As to quaternary structure, F-type ATPases have 2 components, F(1) - the catalytic core - and F(0) - the membrane proton channel. F(1) has five subunits: alpha(3), beta(3), gamma(1), delta(1), epsilon(1). F(0) has three main subunits: a(1), b(2) and c(10-14). The alpha and beta chains form an alternating ring which encloses part of the gamma chain. F(1) is attached to F(0) by a central stalk formed by the gamma and epsilon chains, while a peripheral stalk is formed by the delta and b chains.

The protein resides in the cell membrane. Functionally, f(1)F(0) ATP synthase produces ATP from ADP in the presence of a proton or sodium gradient. F-type ATPases consist of two structural domains, F(1) containing the extramembraneous catalytic core and F(0) containing the membrane proton channel, linked together by a central stalk and a peripheral stalk. During catalysis, ATP synthesis in the catalytic domain of F(1) is coupled via a rotary mechanism of the central stalk subunits to proton translocation. Component of the F(0) channel, it forms part of the peripheral stalk, linking F(1) to F(0). The sequence is that of ATP synthase subunit b from Polynucleobacter asymbioticus (strain DSM 18221 / CIP 109841 / QLW-P1DMWA-1) (Polynucleobacter necessarius subsp. asymbioticus).